We begin with the raw amino-acid sequence, 3132 residues long: Enniatin synthetase (3132 aa).

The tract at residues 53-466 is condensation 1; it reads ADDKQRAVGH…VEKVDMMTQE (414 aa). Positions 186–212 are disordered; the sequence is NDEHPRQFETPDSSQATPEEDLQPNPS. The adenylation 1 stretch occupies residues 495-887; it reads SQSPNKAAVA…GRMDSQVKIR (393 aa). Residues 994–1013 are disordered; the sequence is SQKTHSTPSQQSQAAISSGT. The Carrier 1 domain maps to 1010–1086; the sequence is SSGTDTETKL…GLKAIVIGTS (77 aa). At serine 1047 the chain carries O-(pantetheine 4'-phosphoryl)serine. Residues 1105-1534 form a condensation 2 region; that stretch reads SYAQNRMWFL…ETCISVLPLT (430 aa). The interval 1563 to 1960 is adenylation 2; it reads FREQAAANPE…GRMDNQFKIR (398 aa). Positions 2021 to 2177 are S-adenosyl-L-methionine-dependent N-methyltransferase; the sequence is EGWQDHFESG…YLAEVIDGLI (157 aa). Carrier domains are found at residues 2504 to 2578 and 2598 to 2672; these read FPIS…RQGL and APRT…ESSH. Serine 2538 and serine 2632 each carry O-(pantetheine 4'-phosphoryl)serine. The interval 2719–3124 is condensation 3; it reads QDVYPSTQMQ…RHVLEEVCKT (406 aa).

The protein belongs to the NRP synthetase family. Requires pantetheine 4'-phosphate as cofactor.

It participates in antibiotic biosynthesis; enniatin biosynthesis. Functionally, nonribosomal peptide synthetase that synthesizes enniatin by coupling three D-hydroxycarboxylic acids and three L-amino acids via amide and ester bonds in an alternating fashion. Whereas ESYN1 can accept different amino acids as precursors (L-valine, L-isoleucine or L-leucine), only one species of D-hydroxycarboxylic acid can be found in natural enniatin isolates (D-hydroxyisovaleric acid, D-Hiv). D-Hiv stems from L-valine deanimation by a valine aminotransferase to 2-keto-isovaleric acid (2-Kiv), which becomes subsequently reduced by a keto-isovaleric acid reductase (KivR) to D-Hiv. The protein is Enniatin synthetase of Fusarium oxysporum (Fusarium vascular wilt).